A 298-amino-acid chain; its full sequence is Beta-1,3-galactosyltransferase 5 (298 aa).

At 1 to 7 (MAFPKMR) the chain is on the cytoplasmic side. A helical; Signal-anchor for type II membrane protein transmembrane segment spans residues 8–28 (LMYICLLVLGALCLYFSMYSL). Topologically, residues 29–298 (NPFKEQSFVY…PRTLLDYWQA (270 aa)) are lumenal. 3 N-linked (GlcNAc...) asparagine glycosylation sites follow: N130, N174, and N231.

This sequence belongs to the glycosyltransferase 31 family.

It localises to the golgi apparatus membrane. The catalysed reaction is a globoside Gb4Cer (d18:1(4E)) + UDP-alpha-D-galactose = a globoside GalGb4Cer (d18:1(4E)) + UDP + H(+). The protein operates within protein modification; protein glycosylation. Its function is as follows. Catalyzes the transfer of Gal to GlcNAc-based acceptors with a preference for the core3 O-linked glycan GlcNAc(beta1,3)GalNAc structure. Can use glycolipid LC3Cer as an efficient acceptor. This is Beta-1,3-galactosyltransferase 5 (B3GALT5) from Gorilla gorilla gorilla (Western lowland gorilla).